We begin with the raw amino-acid sequence, 155 residues long: FUN14 domain-containing protein 1 (155 aa).

Residues 1–47 (MATRNPPPQDYESDDDSYEVLDLTEYARRHQWWNRVFGHSSGPMVEK) are Cytoplasmic-facing. The residue at position 13 (Ser13) is a Phosphoserine; by CK2. Residue Ser17 is modified to Phosphoserine; by ULK1. Position 18 is a phosphotyrosine; by SRC (Tyr18). Residues 18–21 (YEVL) carry the YXXL motif. A helical transmembrane segment spans residues 48–68 (YSVATQIVMGGVTGWCAGFLF). Over 69 to 74 (QKVGKL) the chain is Mitochondrial intermembrane. A helical membrane pass occupies residues 75–95 (AATAVGGGFLLLQIASHSGYV). Residues 96-133 (QIDWKRVEKDVNKAKRQIKKRANKAAPEINNLIEEATE) lie on the Cytoplasmic side of the membrane. Residue Lys119 forms a Glycyl lysine isopeptide (Lys-Gly) (interchain with G-Cter in ubiquitin) linkage. A helical transmembrane segment spans residues 134 to 154 (FIKQNIVISSGFVGGFLLGLA). A topological domain (mitochondrial intermembrane) is located at residue Ser155.

Belongs to the FUN14 family. Interacts (via YXXL motif) with MAP1 LC3 family proteins MAP1LC3A, MAP1LC3B and GABARAP. Interacts with DNM1L/DPR1. Interacts with GPX4. In terms of processing, phosphorylation at Ser-13 by CK2 and at Tyr-18 by SRC inhibits activation of mitophagy. Following hypoxia, dephosphorylated at Tyr-18, leading to interaction with MAP1 LC3 family proteins and triggering mitophagy. Dephosphorylation is mediated by PGAM5. Phosphorylated by ULK1 at Ser-17 which enhances FUNDC1 binding to LC3. Post-translationally, ubiquitinated on Lys-119. Deubiquitinated by USP19; leading to hypoxia-induced DRP1 oligomerization and GTPase activity. In terms of tissue distribution, widely expressed.

The protein resides in the mitochondrion outer membrane. Integral mitochondrial outer-membrane protein that mediates the formation of mitochondria-associated endoplasmic reticulum membranes (MAMs). In turn, mediates angiogenesis and neoangiogenesis through interference with intracellular Ca(2+) communication and regulation of the vascular endothelial growth factor receptor KDR/VEGFR2 expression at both mRNA and protein levels. Also acts as an activator of hypoxia-induced mitophagy, an important mechanism for mitochondrial quality and homeostasis, by interacting with and recruiting LC3 protein family to mitochondria. Mechanistically, recruits DRP1 at ER-mitochondria contact sites leading to DRP1 oligomerization and GTPase activity to facilitate mitochondrial fission during hypoxia. Additionally, plays a role in hepatic ferroptosis by interacting directly with glutathione peroxidase/GPX4 to facilitate its recruitment into mitochondria through TOM/TIM complex where it is degraded by mitophagy. This chain is FUN14 domain-containing protein 1 (FUNDC1), found in Homo sapiens (Human).